We begin with the raw amino-acid sequence, 255 residues long: RNA polymerase sigma-F factor (255 aa).

The short motif at 61-74 (DLFQIGCIGLLKSV) is the Polymerase core binding element. The segment at residues 221 to 240 (QSEVAERLGISQVQVSRLEK) is a DNA-binding region (H-T-H motif).

Belongs to the sigma-70 factor family. As to quaternary structure, interacts transiently with the RNAP core.

Interaction with SpoIIAB inhibits sigma-F activity throughout the cell before the formation of the asymmetric septum; after septation the interaction is confined to the mother cell, and sigma-F activity is released in the prespore. Fin, a second, forespore-specific anti-sigma factor is induced in 2 successive waves by sigma-F and sigma-G, by antagonizing sigma-F it allows the switch to sigma-G factor and progression to the late sporulation development stages. In terms of biological role, sigma factors are initiation factors that promote the attachment of RNA polymerase to specific initiation sites and are then released. This sigma factor is responsible for the expression of sporulation specific genes. Interaction with SpoIIAB inhibits sigma-F activity throughout the cell before the formation of the asymmetric septum; after septation the interaction is confined to the mother cell, and sigma F activity is released in the prespore. Responsible for expression of csfB (the anti-sigma-G factor Gin). Associates with the RNAP core only in stationary phase cells. In Bacillus subtilis (strain 168), this protein is RNA polymerase sigma-F factor (sigF).